Consider the following 432-residue polypeptide: GRAM domain-containing protein 2B (432 aa).

M1 is modified (N-acetylmethionine). 2 disordered regions span residues 1–61 (MTEL…SPDQ) and 74–106 (DGAS…SSQY). Basic and acidic residues-rich tracts occupy residues 9–39 (EDTK…EEKK) and 81–99 (DKND…ERKK). Residues 110 to 177 (MHFHKLFLSV…FSVTLIKKTK (68 aa)) form the GRAM domain. A compositionally biased stretch (polar residues) spans 220–233 (TSVGNSPNPSSAEN). Positions 220-239 (TSVGNSPNPSSAENSFRADR) are disordered. Residues S225, S242, and S252 each carry the phosphoserine modification. Residues 262-285 (RQDMEGYSSSGSQTPESENSRDFH) form a disordered region. Residues 268–278 (YSSSGSQTPES) show a composition bias toward polar residues.

This Homo sapiens (Human) protein is GRAM domain-containing protein 2B (GRAMD2B).